A 123-amino-acid polypeptide reads, in one-letter code: Small ribosomal subunit protein uS12c (123 aa).

It belongs to the universal ribosomal protein uS12 family. As to quaternary structure, part of the 30S ribosomal subunit.

The protein localises to the plastid. It localises to the chloroplast. Functionally, with S4 and S5 plays an important role in translational accuracy. Located at the interface of the 30S and 50S subunits. This is Small ribosomal subunit protein uS12c (rps12) from Huperzia lucidula (Shining clubmoss).